An 899-amino-acid polypeptide reads, in one-letter code: Protein translocase subunit SecA (899 aa).

ATP-binding positions include glutamine 87, 105–109, and aspartate 512; that span reads GEGKT. Disordered regions lie at residues 573–592 and 861–899; these read RRIDNQLRGRSGRQGDPGSS and ITVNDDEHPAEPAKSQKNAGRNEPCPCGSGKKYKKCCGK. Positions 885, 887, 896, and 897 each coordinate Zn(2+).

This sequence belongs to the SecA family. As to quaternary structure, monomer and homodimer. Part of the essential Sec protein translocation apparatus which comprises SecA, SecYEG and auxiliary proteins SecDF-YajC and YidC. It depends on Zn(2+) as a cofactor.

It is found in the cell inner membrane. Its subcellular location is the cytoplasm. The enzyme catalyses ATP + H2O + cellular proteinSide 1 = ADP + phosphate + cellular proteinSide 2.. Its function is as follows. Part of the Sec protein translocase complex. Interacts with the SecYEG preprotein conducting channel. Has a central role in coupling the hydrolysis of ATP to the transfer of proteins into and across the cell membrane, serving as an ATP-driven molecular motor driving the stepwise translocation of polypeptide chains across the membrane. This chain is Protein translocase subunit SecA, found in Trichlorobacter lovleyi (strain ATCC BAA-1151 / DSM 17278 / SZ) (Geobacter lovleyi).